Here is a 485-residue protein sequence, read N- to C-terminus: Argininosuccinate lyase (485 aa).

It belongs to the lyase 1 family. Argininosuccinate lyase subfamily.

It localises to the cytoplasm. The catalysed reaction is 2-(N(omega)-L-arginino)succinate = fumarate + L-arginine. The protein operates within amino-acid biosynthesis; L-arginine biosynthesis; L-arginine from L-ornithine and carbamoyl phosphate: step 3/3. This Halobacterium salinarum (strain ATCC 29341 / DSM 671 / R1) protein is Argininosuccinate lyase.